A 187-amino-acid polypeptide reads, in one-letter code: Protein P18, mitochondrial (187 aa).

Residues 1-17 (MRRLSSQLMCTAAAVRF) constitute a mitochondrion transit peptide. The tract at residues 160-187 (NAAKAKADGKEHPSTLAQQQSLFDIKIQ) is disordered.

The protein resides in the mitochondrion inner membrane. Functionally, putative RNA-binding protein. This Leishmania tarentolae (Sauroleishmania tarentolae) protein is Protein P18, mitochondrial.